Here is a 212-residue protein sequence, read N- to C-terminus: MEENNGNNNHYLPQPSSSQLPPPPLYYQSMPLPSYSLPLPYSPQMRNYWIAQMGNATDVKHHAFPLTRIKKIMKSNPEVNMVTAEAPVLISKACEMLILDLTMRSWLHTVEGGRQTLKRSDTLTRSDISAATTRSFKFTFLGDVVPRDPSVVTDDPVLHPDGEVLPPGTVIGYPVFDCNGVYASPPQMQEWPAVPGDGEEAAGEIGGSSGGN.

The segment covering 1-10 (MEENNGNNNH) has biased composition (polar residues). Disordered regions lie at residues 1–23 (MEENNGNNNHYLPQPSSSQLPPP) and 190–212 (EWPAVPGDGEEAAGEIGGSSGGN).

This sequence belongs to the NFYC/HAP5 subunit family. As to quaternary structure, heterotrimeric transcription factor composed of three components, NF-YA, NF-YB and NF-YC. NF-YB and NF-YC must interact and dimerize for NF-YA association and DNA binding. Expressed in flowers.

It is found in the nucleus. Functionally, stimulates the transcription of various genes by recognizing and binding to a CCAAT motif in promoters. The polypeptide is Nuclear transcription factor Y subunit C-7 (NFYC7) (Arabidopsis thaliana (Mouse-ear cress)).